We begin with the raw amino-acid sequence, 98 residues long: Large ribosomal subunit protein uL23 (98 aa).

This sequence belongs to the universal ribosomal protein uL23 family. In terms of assembly, part of the 50S ribosomal subunit. Contacts protein L29, and trigger factor when it is bound to the ribosome.

Its function is as follows. One of the early assembly proteins it binds 23S rRNA. One of the proteins that surrounds the polypeptide exit tunnel on the outside of the ribosome. Forms the main docking site for trigger factor binding to the ribosome. The polypeptide is Large ribosomal subunit protein uL23 (Caulobacter sp. (strain K31)).